The primary structure comprises 165 residues: MISVATAECFTHGKIGTKIHKIACGYKEFEKDSNYDMIHGNVYVMASMFLPSKKGIESLLDVNLPKPDYVFKYSKAYNQENDILVAKLVAKALKNKLNCNIAISSTAGIGNGAVCIVTDYNDYVFSSDIYGDLLKGQNIIKRQESGIEKAYNTFIDILKKEYNLK.

It belongs to the UPF0254 family.

This is UPF0254 protein MMP0935 from Methanococcus maripaludis (strain DSM 14266 / JCM 13030 / NBRC 101832 / S2 / LL).